The sequence spans 835 residues: Involucrin (835 aa).

Positions 1 to 15 (MSQQHTLPVTLSPAL) are enriched in polar residues. Disordered regions lie at residues 1–133 (MSQQ…LDQR), 150–206 (EQLL…LEVP), 221–285 (GQLK…QLKH), 321–342 (GQLKHLDQQEGQLELPEQQEGQ), 381–428 (GQLK…VPEE), 446–486 (LDQQ…LEVP), 501–548 (GQLK…VPEE), and 566–809 (LDQQ…QPAL). Low complexity predominate over residues 76–91 (EQQQQEPQEQELQQQH). Composition is skewed to basic and acidic residues over residues 92 to 115 (WEQHEEHQKAENPEQQLKQEKAQR) and 159 to 168 (QEQHLKHLEQ). Low complexity predominate over residues 169–181 (QEGQLELPEQQEG). 2 stretches are compositionally biased toward basic and acidic residues: residues 182–198 (QLKHLEQQEGQLKHLEQ) and 222–268 (QLKH…HLDQ). 3 stretches are compositionally biased toward low complexity: residues 269-281 (QEGQLELPEQQEG), 329-341 (QEGQLELPEQQEG), and 389-401 (QEGQLELPEQQEG). Composition is skewed to basic and acidic residues over residues 402 to 421 (QLKHLEQQEGQLKHLEHQEG) and 446 to 464 (LDQQEGQLKHLDQQEKQLE). A compositionally biased stretch (low complexity) spans 509–521 (QEGQLELPEQQEG). Basic and acidic residues-rich tracts occupy residues 522 to 541 (QLKHLEQQEGQLKHLEHQEG), 566 to 584 (LDQQEGQLKHLDQQEKQLE), and 594 to 620 (KHLEQQEGQLEHLEGQEGQLEHLEHQE). A compositionally biased stretch (low complexity) spans 655-668 (HLVQQEGQLEQQEG). Basic and acidic residues predominate over residues 669–685 (QVEHLEEQVGQLKHLEE). Residues 693–710 (LEQQQGQLEVPEQQVGQP) show a composition bias toward low complexity. 3 stretches are compositionally biased toward basic and acidic residues: residues 711–721 (KHLEQEEKQLE), 729–738 (QLKHLEKQEA), and 751–775 (KHLEQQEKQLEHPEQKDGQLKHLEQ). Over residues 776-789 (QEGQLKNLEQQKGQ) the composition is skewed to polar residues.

Belongs to the involucrin family. In terms of assembly, directly or indirectly cross-linked to cornifelin (CNFN). Substrate of transglutaminase. Specific glutamines or lysines are cross-linked to keratins, desmoplakin and to inter involucrin molecules. Keratinocytes of epidermis and other stratified squamous epithelia.

It is found in the cytoplasm. Part of the insoluble cornified cell envelope (CE) of stratified squamous epithelia. This chain is Involucrin (IVL), found in Pongo pygmaeus (Bornean orangutan).